The following is a 234-amino-acid chain: Endonuclease V (234 aa).

Mg(2+) contacts are provided by D46 and D116.

Belongs to the endonuclease V family. It depends on Mg(2+) as a cofactor.

It is found in the cytoplasm. It catalyses the reaction Endonucleolytic cleavage at apurinic or apyrimidinic sites to products with a 5'-phosphate.. DNA repair enzyme involved in the repair of deaminated bases. Selectively cleaves double-stranded DNA at the second phosphodiester bond 3' to a deoxyinosine leaving behind the intact lesion on the nicked DNA. The chain is Endonuclease V from Clostridium acetobutylicum (strain ATCC 824 / DSM 792 / JCM 1419 / IAM 19013 / LMG 5710 / NBRC 13948 / NRRL B-527 / VKM B-1787 / 2291 / W).